The primary structure comprises 178 residues: Fimbrial adapter PapK (178 aa).

The signal sequence occupies residues 1-21; that stretch reads MIKSTGALLLFAALSAGQAIA.

The protein localises to the secreted. It is found in the fimbrium. Adapter that links the pilus rod to the base of the tip fibrillum. Regulates the length of the tip fibrillum and joins it to the pilus rod. Pili are polar filaments radiating from the surface of the bacterium to a length of 0.5-1.5 micrometers and numbering 100-300 per cell, and enable bacteria to colonize the epithelium of specific host organs. This Escherichia coli O6:H1 (strain CFT073 / ATCC 700928 / UPEC) protein is Fimbrial adapter PapK (papK).